The primary structure comprises 308 residues: Aspartate carbamoyltransferase catalytic subunit (308 aa).

2 residues coordinate carbamoyl phosphate: Arg-57 and Thr-58. Lys-86 lines the L-aspartate pocket. The carbamoyl phosphate site is built by Arg-107, His-135, and Gln-138. Arg-168 and Arg-229 together coordinate L-aspartate. Residues Leu-268 and Pro-269 each contribute to the carbamoyl phosphate site.

Belongs to the aspartate/ornithine carbamoyltransferase superfamily. ATCase family. As to quaternary structure, heterooligomer of catalytic and regulatory chains.

It catalyses the reaction carbamoyl phosphate + L-aspartate = N-carbamoyl-L-aspartate + phosphate + H(+). It functions in the pathway pyrimidine metabolism; UMP biosynthesis via de novo pathway; (S)-dihydroorotate from bicarbonate: step 2/3. Functionally, catalyzes the condensation of carbamoyl phosphate and aspartate to form carbamoyl aspartate and inorganic phosphate, the committed step in the de novo pyrimidine nucleotide biosynthesis pathway. The chain is Aspartate carbamoyltransferase catalytic subunit from Thermococcus gammatolerans (strain DSM 15229 / JCM 11827 / EJ3).